Consider the following 445-residue polypeptide: Phosphoglucosamine mutase (445 aa).

Residue Ser99 is the Phosphoserine intermediate of the active site. Residues Ser99, Asp242, Asp244, and Asp246 each contribute to the Mg(2+) site. At Ser99 the chain carries Phosphoserine.

It belongs to the phosphohexose mutase family. Requires Mg(2+) as cofactor. Activated by phosphorylation.

It catalyses the reaction alpha-D-glucosamine 1-phosphate = D-glucosamine 6-phosphate. Catalyzes the conversion of glucosamine-6-phosphate to glucosamine-1-phosphate. In Campylobacter jejuni subsp. jejuni serotype O:6 (strain 81116 / NCTC 11828), this protein is Phosphoglucosamine mutase.